The sequence spans 313 residues: Foldase protein PrsA (313 aa).

A signal peptide spans 1–20 (MKKKLLAGAITLLSVATLAA). The N-palmitoyl cysteine moiety is linked to residue cysteine 21. Cysteine 21 carries S-diacylglycerol cysteine lipidation. Residues 143-241 (TPDVTAQIIR…SQYYIVKLTK (99 aa)) form the PpiC domain.

This sequence belongs to the PrsA family.

The protein localises to the cell membrane. The enzyme catalyses [protein]-peptidylproline (omega=180) = [protein]-peptidylproline (omega=0). Its function is as follows. Plays a major role in protein secretion by helping the post-translocational extracellular folding of several secreted proteins. The protein is Foldase protein PrsA of Streptococcus pneumoniae serotype 4 (strain ATCC BAA-334 / TIGR4).